The following is a 187-amino-acid chain: Large ribosomal subunit protein bL32m (187 aa).

Zn(2+) is bound by residues cysteine 109, cysteine 112, cysteine 122, and cysteine 125.

Belongs to the bacterial ribosomal protein bL32 family. Component of the mitochondrial ribosome large subunit (39S) which comprises a 16S rRNA and about 50 distinct proteins. Post-translationally, MRPL32 precursor is processed by the m-AAA protease (composed of AFG3L2 and SPG7), which cleaves the N-terminal transit peptide. Cleavage by the m-AAA protease takes place prior to assembly into the large subunit, an essential step for mitochondrial ribosome (mitoribosome) assembly. Proper processing by the m-AAA protease is dependent on the zinc-binding region within the tightly folded C-terminal domain of MRPL32: zinc-dependent folding halts degradation initiated from the N-terminus and triggers the release of mature MRPL32.

Its subcellular location is the mitochondrion. Its function is as follows. Component of the mitochondrial large ribosomal subunit (mt-LSU). The mitochondrial ribosome (mitoribosome) is a large ribonucleoprotein complex responsible for the synthesis of proteins inside mitochondria. This Mus musculus (Mouse) protein is Large ribosomal subunit protein bL32m (Mrpl32).